A 466-amino-acid chain; its full sequence is Argininosuccinate lyase (466 aa).

It belongs to the lyase 1 family. Argininosuccinate lyase subfamily.

Its subcellular location is the cytoplasm. The catalysed reaction is 2-(N(omega)-L-arginino)succinate = fumarate + L-arginine. It participates in amino-acid biosynthesis; L-arginine biosynthesis; L-arginine from L-ornithine and carbamoyl phosphate: step 3/3. This Synechococcus elongatus (strain ATCC 33912 / PCC 7942 / FACHB-805) (Anacystis nidulans R2) protein is Argininosuccinate lyase.